Here is a 750-residue protein sequence, read N- to C-terminus: Photosystem I P700 chlorophyll a apoprotein A1 (750 aa).

The next 8 membrane-spanning stretches (helical) occupy residues 70–93, 156–179, 195–219, 291–309, 346–369, 385–411, 433–455, and 531–549; these read VFSAHFGQLSIIFLWLSGMYFHGA, LYCTAIGALIFAALMLFAGWFHYH, LNHHLAGLLGLGSLSWAGHQVHVSL, IAHHHLAIAILFLIAGHMY, WHAQLSLNLAMLGSLTIVVAHHMY, LSLFTHHMWIGGFLIVGAAAHAAIFMV, AIISHLNWACIFLGFHSFGLYIH, and FLVHHIHAFTIHVTVLILL. Residues C573 and C582 each coordinate [4Fe-4S] cluster. A run of 2 helical transmembrane segments spans residues 589–610 and 664–686; these read HVFLGLFWMYNAISVVIFHFSW and LSAYGLFFLGAHFVWAFSLMFLF. Position 675 (H675) interacts with chlorophyll a'. Residues M683 and Y691 each contribute to the chlorophyll a site. W692 contributes to the phylloquinone binding site. A helical membrane pass occupies residues 724 to 744; that stretch reads AVGVTHYLLGGIATTWAFFLA.

The protein belongs to the PsaA/PsaB family. The PsaA/B heterodimer binds the P700 chlorophyll special pair and subsequent electron acceptors. PSI consists of a core antenna complex that captures photons, and an electron transfer chain that converts photonic excitation into a charge separation. The eukaryotic PSI reaction center is composed of at least 11 subunits. Requires P700 is a chlorophyll a/chlorophyll a' dimer, A0 is one or more chlorophyll a, A1 is one or both phylloquinones and FX is a shared 4Fe-4S iron-sulfur center. as cofactor.

The protein resides in the plastid. It is found in the chloroplast thylakoid membrane. The catalysed reaction is reduced [plastocyanin] + hnu + oxidized [2Fe-2S]-[ferredoxin] = oxidized [plastocyanin] + reduced [2Fe-2S]-[ferredoxin]. In terms of biological role, psaA and PsaB bind P700, the primary electron donor of photosystem I (PSI), as well as the electron acceptors A0, A1 and FX. PSI is a plastocyanin-ferredoxin oxidoreductase, converting photonic excitation into a charge separation, which transfers an electron from the donor P700 chlorophyll pair to the spectroscopically characterized acceptors A0, A1, FX, FA and FB in turn. Oxidized P700 is reduced on the lumenal side of the thylakoid membrane by plastocyanin. In Panax ginseng (Korean ginseng), this protein is Photosystem I P700 chlorophyll a apoprotein A1.